Reading from the N-terminus, the 448-residue chain is Asparagine--tRNA ligase (448 aa).

It belongs to the class-II aminoacyl-tRNA synthetase family. Homodimer.

It localises to the cytoplasm. It carries out the reaction tRNA(Asn) + L-asparagine + ATP = L-asparaginyl-tRNA(Asn) + AMP + diphosphate + H(+). The chain is Asparagine--tRNA ligase from Streptococcus pyogenes serotype M12 (strain MGAS9429).